Consider the following 396-residue polypeptide: Elongation factor Tu (396 aa).

Residues 10–206 (KPHINVGTIG…QMDAYIPEPQ (197 aa)) form the tr-type G domain. The G1 stretch occupies residues 19 to 26 (GHVDHGKT). 19 to 26 (GHVDHGKT) is a GTP binding site. Thr26 lines the Mg(2+) pocket. The tract at residues 60–64 (GITIA) is G2. The segment at 81 to 84 (DCPG) is G3. GTP is bound by residues 81 to 85 (DCPGH) and 136 to 139 (NKAD). The segment at 136 to 139 (NKAD) is G4. Residues 174–176 (SAL) form a G5 region.

The protein belongs to the TRAFAC class translation factor GTPase superfamily. Classic translation factor GTPase family. EF-Tu/EF-1A subfamily. As to quaternary structure, monomer.

It is found in the cytoplasm. The catalysed reaction is GTP + H2O = GDP + phosphate + H(+). Its function is as follows. GTP hydrolase that promotes the GTP-dependent binding of aminoacyl-tRNA to the A-site of ribosomes during protein biosynthesis. The protein is Elongation factor Tu of Nitrosococcus oceani (strain ATCC 19707 / BCRC 17464 / JCM 30415 / NCIMB 11848 / C-107).